A 165-amino-acid polypeptide reads, in one-letter code: Protein SprT (165 aa).

The region spanning 10–158 is the SprT-like domain; sequence EACYRQAEHF…CRRCKATLVF (149 aa). His-69 is a binding site for Zn(2+). Glu-70 is an active-site residue. His-73 lines the Zn(2+) pocket.

Belongs to the SprT family. The cofactor is Zn(2+).

It is found in the cytoplasm. The sequence is that of Protein SprT from Pseudomonas aeruginosa (strain UCBPP-PA14).